Consider the following 355-residue polypeptide: N-acetyl-gamma-glutamyl-phosphate reductase (355 aa).

The active site involves Cys152.

Belongs to the NAGSA dehydrogenase family. Type 1 subfamily.

It is found in the cytoplasm. The enzyme catalyses N-acetyl-L-glutamate 5-semialdehyde + phosphate + NADP(+) = N-acetyl-L-glutamyl 5-phosphate + NADPH + H(+). It functions in the pathway amino-acid biosynthesis; L-arginine biosynthesis; N(2)-acetyl-L-ornithine from L-glutamate: step 3/4. Functionally, catalyzes the NADPH-dependent reduction of N-acetyl-5-glutamyl phosphate to yield N-acetyl-L-glutamate 5-semialdehyde. This Psychrobacter sp. (strain PRwf-1) protein is N-acetyl-gamma-glutamyl-phosphate reductase.